A 245-amino-acid polypeptide reads, in one-letter code: MRVDGREKTELRHIHIHTNYLKHPEGSVLIEVGDTKVICSATIEERVPPFMRGEGKGWVTAEYAMIPRATEQRTIRESSKGKVTGRTMEIQRLIGRALRAVVDLEALGERTVWIDCDVIQADGGTRTASITGAYVAMVLAFEKLLQAEKVSKIPVKDYLAATSVGIVEEQGVVLDLNYAEDSKADVDMNVIMTGKGQFVEVQGTGEEATFSRAQLNELLDAAEQGIFQLIDMQKEALGDIVSHIE.

Residues Arg86 and 124-126 (GTR) contribute to the phosphate site.

The protein belongs to the RNase PH family. In terms of assembly, homohexameric ring arranged as a trimer of dimers.

The enzyme catalyses tRNA(n+1) + phosphate = tRNA(n) + a ribonucleoside 5'-diphosphate. Its function is as follows. Phosphorolytic 3'-5' exoribonuclease that plays an important role in tRNA 3'-end maturation. Removes nucleotide residues following the 3'-CCA terminus of tRNAs; can also add nucleotides to the ends of RNA molecules by using nucleoside diphosphates as substrates, but this may not be physiologically important. Probably plays a role in initiation of 16S rRNA degradation (leading to ribosome degradation) during starvation. The chain is Ribonuclease PH from Bacillus cereus (strain ATCC 10987 / NRS 248).